The sequence spans 508 residues: Lysine--tRNA ligase (508 aa).

2 residues coordinate Mg(2+): Glu-418 and Glu-425.

This sequence belongs to the class-II aminoacyl-tRNA synthetase family. In terms of assembly, homodimer. Requires Mg(2+) as cofactor.

It is found in the cytoplasm. It carries out the reaction tRNA(Lys) + L-lysine + ATP = L-lysyl-tRNA(Lys) + AMP + diphosphate. This chain is Lysine--tRNA ligase, found in Burkholderia multivorans (strain ATCC 17616 / 249).